A 203-amino-acid polypeptide reads, in one-letter code: Suppressor/enhancer of lin-12 protein 9 (203 aa).

A signal peptide spans M1 to S18. Over Y19–R170 the chain is Lumenal. Positions E28–I110 constitute a GOLD domain. A helical membrane pass occupies residues V171–F191. Topologically, residues Y192–V203 are cytoplasmic.

This sequence belongs to the EMP24/GP25L family.

The protein localises to the cytoplasmic vesicle membrane. Its subcellular location is the cytoplasmic vesicle. It localises to the COPI-coated vesicle membrane. The protein resides in the golgi apparatus membrane. Its function is as follows. May have a role in the negative regulation of lin-12 and glp-1 transport to the cell surface. May also have a role in a quality control mechanism for endoplasmic reticulum-Golgi transport; the budding of coatomer-coated and other species of coated vesicles, could bind cargo molecules to collect them into budding vesicles. Involved in regulating the expression of proteasomal subunits such as rpt-3 in order to confer resistance to proteasomal dysfunction. This Caenorhabditis elegans protein is Suppressor/enhancer of lin-12 protein 9 (sel-9).